Reading from the N-terminus, the 470-residue chain is Adenosylhomocysteinase (470 aa).

The substrate site is built by threonine 61, aspartate 136, and glutamate 196. 197–199 (TTT) provides a ligand contact to NAD(+). Substrate-binding residues include lysine 226 and aspartate 230. NAD(+) contacts are provided by residues asparagine 231, 260 to 265 (GYGDVG), glutamate 283, asparagine 318, 339 to 341 (IGH), and asparagine 384.

This sequence belongs to the adenosylhomocysteinase family. NAD(+) serves as cofactor.

It is found in the cytoplasm. The catalysed reaction is S-adenosyl-L-homocysteine + H2O = L-homocysteine + adenosine. It participates in amino-acid biosynthesis; L-homocysteine biosynthesis; L-homocysteine from S-adenosyl-L-homocysteine: step 1/1. May play a key role in the regulation of the intracellular concentration of adenosylhomocysteine. The polypeptide is Adenosylhomocysteinase (Aromatoleum aromaticum (strain DSM 19018 / LMG 30748 / EbN1) (Azoarcus sp. (strain EbN1))).